Here is a 312-residue protein sequence, read N- to C-terminus: Coiled-coil domain-containing protein 42 homolog (312 aa).

2 coiled-coil regions span residues 34–121 and 172–233; these read RLLE…RLKE and ATHQ…WESQ.

The protein belongs to the CFAP73 family.

In Nematostella vectensis (Starlet sea anemone), this protein is Coiled-coil domain-containing protein 42 homolog.